The chain runs to 471 residues: Mannose-1-phosphate guanylyltransferase (471 aa).

Belongs to the mannose-6-phosphate isomerase type 2 family.

It carries out the reaction alpha-D-mannose 1-phosphate + GTP + H(+) = GDP-alpha-D-mannose + diphosphate. Its pathway is nucleotide-sugar biosynthesis; GDP-alpha-D-mannose biosynthesis; GDP-alpha-D-mannose from alpha-D-mannose 1-phosphate (GTP route): step 1/1. It functions in the pathway bacterial outer membrane biogenesis; LPS O-antigen biosynthesis. Its function is as follows. Involved in GDP-mannose biosynthesis which serves as the activated sugar nucleotide precursor for mannose residues in cell surface polysaccharides. This enzyme participates in synthesis of the LPS O9 antigen. This Escherichia coli protein is Mannose-1-phosphate guanylyltransferase (manC).